Consider the following 359-residue polypeptide: 4-hydroxy-3-methylbut-2-en-1-yl diphosphate synthase (flavodoxin) (359 aa).

Residues Cys-264, Cys-267, Cys-299, and Glu-306 each coordinate [4Fe-4S] cluster.

It belongs to the IspG family. Requires [4Fe-4S] cluster as cofactor.

It carries out the reaction (2E)-4-hydroxy-3-methylbut-2-enyl diphosphate + oxidized [flavodoxin] + H2O + 2 H(+) = 2-C-methyl-D-erythritol 2,4-cyclic diphosphate + reduced [flavodoxin]. Its pathway is isoprenoid biosynthesis; isopentenyl diphosphate biosynthesis via DXP pathway; isopentenyl diphosphate from 1-deoxy-D-xylulose 5-phosphate: step 5/6. Functionally, converts 2C-methyl-D-erythritol 2,4-cyclodiphosphate (ME-2,4cPP) into 1-hydroxy-2-methyl-2-(E)-butenyl 4-diphosphate. The chain is 4-hydroxy-3-methylbut-2-en-1-yl diphosphate synthase (flavodoxin) from Helicobacter pylori (strain P12).